Consider the following 579-residue polypeptide: 3-hydroxy-3-methylglutaryl-coenzyme A reductase (579 aa).

The segment at 1–22 (MEVRGGVGQGSAARHPPAPEPS) is disordered. 2 helical membrane-spanning segments follow: residues 36–56 (LPIR…LAYL) and 80–100 (AIFG…IAFV). Positions 101-153 (QSIVSSGDDDEDFLVGSGSSGSAAAPSRQHAQAPAPCELLGSPAAAPEKMPED) are linker. A catalytic region spans residues 154–579 (DEEIVASVVA…EKTRQREVDV (426 aa)). Residue Glu-247 is the Charge relay system of the active site. An N-linked (GlcNAc...) asparagine glycan is attached at Asn-311. Catalysis depends on charge relay system residues Lys-379 and Asp-455. Residues 524-544 (LLATVVAGGVLAGELSLLSAL) traverse the membrane as a helical segment. Catalysis depends on His-553, which acts as the Proton donor. Positions 555–579 (KYNRSSKDVSSTTATEKTRQREVDV) are disordered. N-linked (GlcNAc...) asparagine glycosylation is present at Asn-557. Residues 570-579 (EKTRQREVDV) are compositionally biased toward basic and acidic residues.

It belongs to the HMG-CoA reductase family.

The protein resides in the endoplasmic reticulum membrane. It carries out the reaction (R)-mevalonate + 2 NADP(+) + CoA = (3S)-3-hydroxy-3-methylglutaryl-CoA + 2 NADPH + 2 H(+). It functions in the pathway metabolic intermediate biosynthesis; (R)-mevalonate biosynthesis; (R)-mevalonate from acetyl-CoA: step 3/3. Its function is as follows. Catalyzes the synthesis of mevalonate. The specific precursor of all isoprenoid compounds present in plants. This Zea mays (Maize) protein is 3-hydroxy-3-methylglutaryl-coenzyme A reductase (HMGR).